The chain runs to 643 residues: Sodium-dependent nutrient amino acid transporter 1 (643 aa).

Residues 1–38 (MELKGVQPSNGSPNGNGNGATNAASTEKTDAEKPTAER) form a disordered region. Topologically, residues 1–40 (MELKGVQPSNGSPNGNGNGATNAASTEKTDAEKPTAERTN) are cytoplasmic. Residues 8–26 (PSNGSPNGNGNGATNAAST) show a composition bias toward low complexity. Over residues 27–36 (EKTDAEKPTA) the composition is skewed to basic and acidic residues. 3 helical membrane passes run 41–61 (WGNGLEFLMSCISVSVGLGNV), 74–94 (GAFLIPYIIVLFLIGKPMYYL), and 111–131 (SVVPGFVGVGYGQAFGTICII). 3 N-linked (GlcNAc...) asparagine glycosylation sites follow: Asn185, Asn190, and Asn200. The next 9 helical transmembrane spans lie at 231 to 251 (PDWKLTLALFVAWVVIFLVIM), 260 to 280 (AAYFLALFPYVVLFVLLIRAV), 309 to 329 (AVVQCFFSLAVGSGPIIMFAS), 343 to 363 (IVTTLDTLTSLLGGITIFAIL), 403 to 423 (LFSVLFFFMLFVLGIGSIVAL), 449 to 469 (VCGFLMGLVYVTPGGQWILTL), 476 to 496 (TYVVFILAIFELAGIVWVYGL), 518 to 538 (CWSFFTPVMMIIIFIYSMATI), and 554 to 574 (VAGWLLFAIGAAQFPLWGLWY).

It belongs to the sodium:neurotransmitter symporter (SNF) (TC 2.A.22) family.

The protein resides in the membrane. Its function is as follows. Unusual broad substrate spectrum amino acid:sodium cotransporter that promotes absorption of the D isomers of essential amino acids. Neutral amino acids are the preferred substrates, especially methionine and phenylalanine. This Drosophila simulans (Fruit fly) protein is Sodium-dependent nutrient amino acid transporter 1.